The sequence spans 149 residues: Large ribosomal subunit protein bL9 (149 aa).

This sequence belongs to the bacterial ribosomal protein bL9 family.

Its function is as follows. Binds to the 23S rRNA. The protein is Large ribosomal subunit protein bL9 of Geobacillus kaustophilus (strain HTA426).